The following is a 166-amino-acid chain: Regulatory protein RecX (166 aa).

Belongs to the RecX family.

The protein resides in the cytoplasm. In terms of biological role, modulates RecA activity. The chain is Regulatory protein RecX from Shigella boydii serotype 4 (strain Sb227).